A 459-amino-acid chain; its full sequence is Exodeoxyribonuclease 7 large subunit (459 aa).

Belongs to the XseA family. In terms of assembly, heterooligomer composed of large and small subunits.

The protein localises to the cytoplasm. The enzyme catalyses Exonucleolytic cleavage in either 5'- to 3'- or 3'- to 5'-direction to yield nucleoside 5'-phosphates.. Its function is as follows. Bidirectionally degrades single-stranded DNA into large acid-insoluble oligonucleotides, which are then degraded further into small acid-soluble oligonucleotides. In Yersinia pseudotuberculosis serotype O:3 (strain YPIII), this protein is Exodeoxyribonuclease 7 large subunit.